A 712-amino-acid chain; its full sequence is Envelope glycoprotein gp160 (712 aa).

The first 24 residues, 1–24, serve as a signal peptide directing secretion; it reads MCGRNQLFVASLLASACLIYCVQY. The Extracellular portion of the chain corresponds to 25–673; that stretch reads VTVFYGVPVW…LTSWIKYIQY (649 aa). Asparagine 36 carries an N-linked (GlcNAc...) asparagine; by host glycan. A disulfide bridge connects residues cysteine 43 and cysteine 56. N-linked (GlcNAc...) asparagine; by host glycosylation is found at asparagine 69, asparagine 78, asparagine 113, asparagine 119, asparagine 131, asparagine 137, asparagine 145, asparagine 160, asparagine 173, asparagine 200, asparagine 232, asparagine 235, asparagine 242, asparagine 266, asparagine 272, asparagine 283, asparagine 294, asparagine 304, asparagine 359, asparagine 392, asparagine 402, asparagine 405, asparagine 442, asparagine 457, and asparagine 460. Cystine bridges form between cysteine 100-cysteine 208, cysteine 107-cysteine 199, cysteine 112-cysteine 157, cysteine 221-cysteine 251, and cysteine 231-cysteine 243. The interval 112-156 is V1; the sequence is CNSTTAKNTTSTPTTTTTANTTIGENSSCIRTDNCTGLGEEEMVD. Residues 157–199 are V2; the sequence is CQFNMTGLERDKKKLYNETWYSKDVVCESKDTKKEKTCYMNHC. The V3 stretch occupies residues 299 to 331; sequence CKRPGNKTVVPITLMSGLVFHSQPINRRPRQAW. Cysteines 299 and 332 form a disulfide. Disulfide bonds link cysteine 384–cysteine 441 and cysteine 391–cysteine 414. The V4 stretch occupies residues 391–414; sequence CNMTWFLNWVENRTNQTQHNYVPC. A V5 region spans residues 457–463; it reads NQTNITF. The fusion peptide stretch occupies residues 506-526; sequence GVFVLGFLGFLTTAGAAMGAA. The interval 569–585 is immunosuppression; it reads LQARVTAIEKYLKDQAQ. N-linked (GlcNAc...) asparagine; by host glycans are attached at residues asparagine 605, asparagine 614, and asparagine 630. A coiled-coil region spans residues 614-646; that stretch reads NITWQEWEQRIRNLEANISESLEQAQIQQEKNM. Positions 651–672 are MPER; binding to GalCer; that stretch reads KLNSWDVFSNWFDLTSWIKYIQ. A helical membrane pass occupies residues 674–694; it reads GVYIVVGIIVLRMVIYVVQML. The Cytoplasmic portion of the chain corresponds to 695–712; the sequence is SRLRKGYRPVFSSPPAYS. The YXXV motif; contains endocytosis signal motif lies at 701 to 704; sequence YRPV.

The mature envelope protein (Env) consists of a homotrimer of non-covalently associated gp120-gp41 heterodimers. The resulting complex protrudes from the virus surface as a spike. There seems to be as few as 10 spikes on the average virion. Interacts with human CD4, CCR5 and CXCR4, to form a P4HB/PDI-CD4-CXCR4-gp120 complex. Gp120 also interacts with the C-type lectins CD209/DC-SIGN and CLEC4M/DC-SIGNR (collectively referred to as DC-SIGN(R)). Gp120 and gp41 interact with GalCer. In terms of assembly, the mature envelope protein (Env) consists of a homotrimer of non-covalently associated gp120-gp41 heterodimers. The resulting complex protrudes from the virus surface as a spike. There seems to be as few as 10 spikes on the average virion. Post-translationally, specific enzymatic cleavages in vivo yield mature proteins. Envelope glycoproteins are synthesized as an inactive precursor that is heavily N-glycosylated and processed likely by host cell furin in the Golgi to yield the mature SU and TM proteins. The cleavage site between SU and TM requires the minimal sequence [KR]-X-[KR]-R.

It is found in the virion membrane. It localises to the host cell membrane. The protein resides in the host endosome membrane. Its function is as follows. The surface protein gp120 (SU) attaches the virus to the host lymphoid cell by binding to the primary receptor CD4. This interaction induces a structural rearrangement creating a high affinity binding site for a chemokine coreceptor like CXCR4 and/or CCR5. This peculiar 2 stage receptor-interaction strategy allows gp120 to maintain the highly conserved coreceptor-binding site in a cryptic conformation, protected from neutralizing antibodies. Since CD4 also displays a binding site for the disulfide-isomerase P4HB/PDI, a P4HB/PDI-CD4-CXCR4-gp120 complex may form. In that complex, P4HB/PDI could reach and reduce gp120 disulfide bonds, causing major conformational changes in gp120. TXN, another PDI family member could also be involved in disulfide rearrangements in Env during fusion. These changes are transmitted to the transmembrane protein gp41 and are thought to activate its fusogenic potential by unmasking its fusion peptide. In terms of biological role, the surface protein gp120 is a ligand for CD209/DC-SIGN and CLEC4M/DC-SIGNR, which are respectively found on dendritic cells (DCs), and on endothelial cells of liver sinusoids and lymph node sinuses. These interactions allow capture of viral particles at mucosal surfaces by these cells and subsequent transmission to permissive cells. DCs are professional antigen presenting cells, critical for host immunity by inducing specific immune responses against a broad variety of pathogens. They act as sentinels in various tissues where they take up antigen, process it, and present it to T-cells following migration to lymphoid organs. HIV subverts the migration properties of dendritic cells to gain access to CD4+ T-cells in lymph nodes. Virus transmission to permissive T-cells occurs either in trans (without DCs infection, through viral capture and transmission), or in cis (following DCs productive infection, through the usual CD4-gp120 interaction), thereby inducing a robust infection. In trans infection, bound virions remain infectious over days and it is proposed that they are not degraded, but protected in non-lysosomal acidic organelles within the DCs close to the cell membrane thus contributing to the viral infectious potential during DCs' migration from the periphery to the lymphoid tissues. On arrival at lymphoid tissues, intact virions recycle back to DCs' cell surface allowing virus transmission to CD4+ T-cells. Virion capture also seems to lead to MHC-II-restricted viral antigen presentation, and probably to the activation of HIV-specific CD4+ cells. Functionally, the transmembrane protein gp41 (TM) acts as a class I viral fusion protein. Under the current model, the protein has at least 3 conformational states: pre-fusion native state, pre-hairpin intermediate state, and post-fusion hairpin state. During fusion of viral and target intracellular membranes, the coiled coil regions (heptad repeats) assume a trimer-of-hairpins structure, positioning the fusion peptide in close proximity to the C-terminal region of the ectodomain. The formation of this structure appears to drive apposition and subsequent fusion of viral and target cell membranes. Complete fusion occurs in host cell endosomes and is dynamin-dependent, however some lipid transfer might occur at the plasma membrane. The virus undergoes clathrin-dependent internalization long before endosomal fusion, thus minimizing the surface exposure of conserved viral epitopes during fusion and reducing the efficacy of inhibitors targeting these epitopes. Membranes fusion leads to delivery of the nucleocapsid into the cytoplasm. The envelope glycoprotein gp160 precursor down-modulates cell surface CD4 antigen by interacting with it in the endoplasmic reticulum and blocking its transport to the cell surface. Its function is as follows. The gp120-gp41 heterodimer seems to contribute to T-cell depletion during HIV-1 infection. The envelope glycoproteins expressed on the surface of infected cells induce apoptosis through an interaction with uninfected cells expressing the receptor (CD4) and the coreceptors CXCR4 or CCR5. This type of bystander killing may be obtained by at least three distinct mechanisms. First, the interaction between the 2 cells can induce cellular fusion followed by nuclear fusion within the syncytium. Syncytia are condemned to die from apoptosis. Second, the 2 interacting cells may not fuse entirely and simply exchange plasma membrane lipids, after a sort of hemifusion process, followed by rapid death. Third, it is possible that virus-infected cells, on the point of undergoing apoptosis, fuse with CD4-expressing cells, in which case apoptosis is rapidly transmitted from one cell to the other and thus occurs in a sort of contagious fashion. In terms of biological role, the gp120-gp41 heterodimer allows rapid transcytosis of the virus through CD4 negative cells such as simple epithelial monolayers of the intestinal, rectal and endocervical epithelial barriers. Both gp120 and gp41 specifically recognize glycosphingolipids galactosyl-ceramide (GalCer) or 3' sulfo-galactosyl-ceramide (GalS) present in the lipid rafts structures of epithelial cells. Binding to these alternative receptors allows the rapid transcytosis of the virus through the epithelial cells. This transcytotic vesicle-mediated transport of virions from the apical side to the basolateral side of the epithelial cells does not involve infection of the cells themselves. The protein is Envelope glycoprotein gp160 (env) of Homo sapiens (Human).